The sequence spans 591 residues: ESX-1 secretion system protein EccCb1 (591 aa).

FtsK domains are found at residues 65–259 (LQDV…NETQ) and 359–545 (LTPA…EKQE). Residues 84–91 (GAPQTGKS) and 376–383 (GAAKSGKT) contribute to the ATP site.

In terms of assembly, part of the ESX-1 / type VII secretion system (T7SS), which is composed of cytosolic and membrane components. The ESX-1 membrane complex is composed of EccB1, EccCa1, EccCb1, EccD1 and EccE1. Interacts with EccCa1, EspK and the C-terminus of EsxB. Residues 1-261 interact with EsxB and an artificial EsxB-EsxA heterodimer.

The protein resides in the cytoplasm. EsxB binding to the second FtsK domain of EccCb1 causes multimerization; a subsequent unknown step relieves the allosteric inhibition of linker 2 on FtsK domain 1 (in EccCa1 subunit), activating the ATPase activity. In terms of biological role, part of the ESX-1 specialized secretion system, which delivers several virulence factors to host cells during infection, including the key virulence factors EsxA (ESAT-6) and EsxB (CFP-10). EccCb1 may link the cytosolic components of the system with the membrane components. This chain is ESX-1 secretion system protein EccCb1, found in Mycobacterium tuberculosis (strain ATCC 25618 / H37Rv).